We begin with the raw amino-acid sequence, 195 residues long: Cysteine/O-acetylserine efflux protein (195 aa).

Residues 1-9 are Periplasmic-facing; it reads MTPMLLSAF. The chain crosses the membrane as a helical span at residues 10 to 32; the sequence is WTYTLITALTPGPNNILALSAAT. At 33 to 46 the chain is on the cytoplasmic side; that stretch reads AHGFRQSIRVLAGM. The helical transmembrane segment at 47 to 67 threads the bilayer; it reads SLGFLVVMLLCAGIAFSLAVI. Topologically, residues 68 to 69 are periplasmic; the sequence is DP. Residues 70–90 traverse the membrane as a helical segment; that stretch reads AIIHLLSWVGAAYILWLAWKI. Residues 91–104 lie on the Cytoplasmic side of the membrane; it reads ATSPAADENARPKP. The helical transmembrane segment at 105 to 125 threads the bilayer; it reads VGFWVSFGLQFVNVKIILYGI. Topologically, residues 126-141 are periplasmic; the sequence is TALSTFVLPQTQALNW. Residues 142–162 form a helical membrane-spanning segment; sequence VIGVSILLALIGTFGNVCWAL. Residues 163-176 are Cytoplasmic-facing; sequence AGHLFQRAFRHYGR. A helical transmembrane segment spans residues 177-194; that stretch reads QLNIILALLLVYCAVRIF. A topological domain (periplasmic) is located at residue Tyr195.

It belongs to the Rht family.

It localises to the cell inner membrane. The enzyme catalyses O-acetyl-L-serine(in) = O-acetyl-L-serine(out). It carries out the reaction L-cysteine(in) = L-cysteine(out). Its function is as follows. Exporter of O-acetylserine (OAS) and cysteine. This is Cysteine/O-acetylserine efflux protein (eamB) from Salmonella choleraesuis (strain SC-B67).